The sequence spans 766 residues: Coenzyme PQQ synthesis protein F (766 aa).

H49 serves as a coordination point for Zn(2+). Residue E52 is the Proton acceptor of the active site. Zn(2+) is bound by residues H53 and E130.

It belongs to the peptidase M16 family. Zn(2+) is required as a cofactor.

It participates in cofactor biosynthesis; pyrroloquinoline quinone biosynthesis. Its function is as follows. Required for coenzyme pyrroloquinoline quinone (PQQ) biosynthesis. It is thought that this protein is a protease that cleaves peptides bond in a small peptide (gene pqqA), providing the glutamate and tyrosine residues which are necessary for the synthesis of PQQ. In Pseudomonas putida (strain ATCC 47054 / DSM 6125 / CFBP 8728 / NCIMB 11950 / KT2440), this protein is Coenzyme PQQ synthesis protein F (pqqF).